The chain runs to 459 residues: Phosphoglucosamine mutase (459 aa).

Residue S102 is the Phosphoserine intermediate of the active site. Residues S102, D243, D245, and D247 each contribute to the Mg(2+) site. S102 carries the phosphoserine modification.

It belongs to the phosphohexose mutase family. Mg(2+) is required as a cofactor. Activated by phosphorylation.

It catalyses the reaction alpha-D-glucosamine 1-phosphate = D-glucosamine 6-phosphate. Its function is as follows. Catalyzes the conversion of glucosamine-6-phosphate to glucosamine-1-phosphate. The polypeptide is Phosphoglucosamine mutase (Bartonella henselae (strain ATCC 49882 / DSM 28221 / CCUG 30454 / Houston 1) (Rochalimaea henselae)).